Here is a 140-residue protein sequence, read N- to C-terminus: ATP synthase epsilon chain, chloroplastic (140 aa).

The protein belongs to the ATPase epsilon chain family. F-type ATPases have 2 components, CF(1) - the catalytic core - and CF(0) - the membrane proton channel. CF(1) has five subunits: alpha(3), beta(3), gamma(1), delta(1), epsilon(1). CF(0) has three main subunits: a, b and c.

It is found in the plastid. The protein localises to the chloroplast thylakoid membrane. Functionally, produces ATP from ADP in the presence of a proton gradient across the membrane. This Panax ginseng (Korean ginseng) protein is ATP synthase epsilon chain, chloroplastic.